The chain runs to 101 residues: NADH-quinone oxidoreductase subunit K (101 aa).

3 helical membrane passes run Leu-4–Ile-24, Leu-30–Phe-50, and Val-61–Val-81.

This sequence belongs to the complex I subunit 4L family. In terms of assembly, NDH-1 is composed of 14 different subunits. Subunits NuoA, H, J, K, L, M, N constitute the membrane sector of the complex.

It localises to the cell inner membrane. It carries out the reaction a quinone + NADH + 5 H(+)(in) = a quinol + NAD(+) + 4 H(+)(out). NDH-1 shuttles electrons from NADH, via FMN and iron-sulfur (Fe-S) centers, to quinones in the respiratory chain. The immediate electron acceptor for the enzyme in this species is believed to be ubiquinone. Couples the redox reaction to proton translocation (for every two electrons transferred, four hydrogen ions are translocated across the cytoplasmic membrane), and thus conserves the redox energy in a proton gradient. In Alkalilimnicola ehrlichii (strain ATCC BAA-1101 / DSM 17681 / MLHE-1), this protein is NADH-quinone oxidoreductase subunit K.